The chain runs to 150 residues: Translation machinery-associated protein 17 (150 aa).

Phosphoserine occurs at positions 24 and 68. The segment at 110–139 is disordered; that stretch reads RKTGHGKSKHEVEAKDNTNKGPDVDMDNSN. Over residues 118–127 the composition is skewed to basic and acidic residues; the sequence is KHEVEAKDNT.

As to quaternary structure, interacts with RPT6. Interacts with the 40S and 60S ribosomal subunits.

It localises to the cytoplasm. The protein resides in the nucleus. ATPase-dedicated chaperone that assists the formation of the RPT6-RPT3 ATPase pair, an early step in proteasome assembly. Plays a key role in maintaining homeostatic proteasome levels and adjusting proteasome assembly when demands increase, such as during proteasome stresses. Function overlaps with RPN14. This chain is Translation machinery-associated protein 17 (TMA17), found in Saccharomyces cerevisiae (strain ATCC 204508 / S288c) (Baker's yeast).